Here is a 382-residue protein sequence, read N- to C-terminus: Carbamoyl phosphate synthase small chain (382 aa).

Residues 1-189 (MIKSALLVLE…GLPEAKKEDE (189 aa)) are CPSase. L-glutamine contacts are provided by serine 47, glycine 241, and glycine 243. The Glutamine amidotransferase type-1 domain maps to 193–380 (HVVAYDFGAK…IELIEQYRKT (188 aa)). Residue cysteine 269 is the Nucleophile of the active site. Positions 270, 273, 311, 313, and 314 each coordinate L-glutamine. Active-site residues include histidine 353 and glutamate 355.

This sequence belongs to the CarA family. In terms of assembly, composed of two chains; the small (or glutamine) chain promotes the hydrolysis of glutamine to ammonia, which is used by the large (or ammonia) chain to synthesize carbamoyl phosphate. Tetramer of heterodimers (alpha,beta)4.

It catalyses the reaction hydrogencarbonate + L-glutamine + 2 ATP + H2O = carbamoyl phosphate + L-glutamate + 2 ADP + phosphate + 2 H(+). The enzyme catalyses L-glutamine + H2O = L-glutamate + NH4(+). It participates in amino-acid biosynthesis; L-arginine biosynthesis; carbamoyl phosphate from bicarbonate: step 1/1. Its pathway is pyrimidine metabolism; UMP biosynthesis via de novo pathway; (S)-dihydroorotate from bicarbonate: step 1/3. Its function is as follows. Small subunit of the glutamine-dependent carbamoyl phosphate synthetase (CPSase). CPSase catalyzes the formation of carbamoyl phosphate from the ammonia moiety of glutamine, carbonate, and phosphate donated by ATP, constituting the first step of 2 biosynthetic pathways, one leading to arginine and/or urea and the other to pyrimidine nucleotides. The small subunit (glutamine amidotransferase) binds and cleaves glutamine to supply the large subunit with the substrate ammonia. This is Carbamoyl phosphate synthase small chain from Escherichia coli O157:H7.